We begin with the raw amino-acid sequence, 416 residues long: Lipid II:glycine glycyltransferase (416 aa).

Belongs to the FemABX family.

It localises to the cytoplasm. It carries out the reaction beta-D-GlcNAc-(1-&gt;4)-Mur2Ac(oyl-L-Ala-D-isoglutaminyl-L-Lys-D-Ala-D-Ala)-di-trans,octa-cis-undecaprenyl diphosphate + glycyl-tRNA(Gly) = beta-D-GlcNAc-(1-&gt;4)-Mur2Ac(oyl-L-Ala-D-isoglutaminyl-L-Lys-(N(6)-Gly)-D-Ala-D-Ala)-di-trans,octa-cis-undecaprenyl diphosphate + tRNA(Gly) + H(+). Functionally, catalyzes the incorporation of amino acid(s) into the interchain peptide bridge of peptidoglycan, using aminoacyl-tRNA as amino acid donor. This is Lipid II:glycine glycyltransferase (femX) from Staphylococcus epidermidis (strain ATCC 35984 / DSM 28319 / BCRC 17069 / CCUG 31568 / BM 3577 / RP62A).